A 167-amino-acid polypeptide reads, in one-letter code: MPRSQRNDNFIDKTFTVIADILLKILPTSNKEKQAFSYYRDGMSAQSEGEYAEALQNYYEALRLETDAYDRSYILYNIGLIHTSNGDHARALDYYYQALERNPSLPQALNNIAVIYHYRGEQALESSQTEISKLLFDKAADYWREAIRLAPTNYIEAQNWLKMTGRF.

3 TPR repeats span residues 35 to 68, 72 to 105, and 120 to 153; these read AFSYYRDGMSAQSEGEYAEALQNYYEALRLETDA, SYILYNIGLIHTSNGDHARALDYYYQALERNPSL, and GEQALESSQTEISKLLFDKAADYWREAIRLAPTN.

It belongs to the Ycf3 family.

Its subcellular location is the plastid. The protein resides in the chloroplast thylakoid membrane. Essential for the assembly of the photosystem I (PSI) complex. May act as a chaperone-like factor to guide the assembly of the PSI subunits. This chain is Photosystem I assembly protein Ycf3, found in Chlorella vulgaris (Green alga).